The sequence spans 188 residues: Small ribosomal subunit protein uS7 (188 aa).

It belongs to the universal ribosomal protein uS7 family. In terms of assembly, part of the 30S ribosomal subunit.

In terms of biological role, one of the primary rRNA binding proteins, it binds directly to 16S rRNA where it nucleates assembly of the head domain of the 30S subunit. Is located at the subunit interface close to the decoding center. The protein is Small ribosomal subunit protein uS7 of Methanococcus aeolicus (strain ATCC BAA-1280 / DSM 17508 / OCM 812 / Nankai-3).